A 99-amino-acid polypeptide reads, in one-letter code: uncharacterized protein (99 aa).

The first 17 residues, 1-17 (MMMNAFFPAMALIVLVG), serve as a signal peptide directing secretion. Residue Cys18 is the site of N-palmitoyl cysteine attachment. A lipid anchor (S-diacylglycerol cysteine) is attached at Cys18.

It localises to the cell membrane. This is an uncharacterized protein from Escherichia coli O6:H1 (strain CFT073 / ATCC 700928 / UPEC).